Here is a 325-residue protein sequence, read N- to C-terminus: Geranylgeranyl transferase type-2 subunit beta (325 aa).

PFTB repeat units lie at residues 9–50, 57–99, 109–150, 157–198, 208–249, and 256–298; these read KEKH…CVLD, KEEV…ATYD, KVRL…SILG, VDPA…AIAN, LEEI…AIIG, and YEKL…SLMG. Geranylgeranyl diphosphate is bound by residues 183–185 and 228–240; these read HAA and RPSK…YSWW. Residues aspartate 234, cysteine 236, and histidine 286 each contribute to the Zn(2+) site.

Belongs to the protein prenyltransferase subunit beta family. As to quaternary structure, heterodimer of an alpha and a beta subunit. Requires Zn(2+) as cofactor.

It carries out the reaction geranylgeranyl diphosphate + L-cysteinyl-[protein] = S-geranylgeranyl-L-cysteinyl-[protein] + diphosphate. Its function is as follows. Catalyzes the transfer of a geranyl-geranyl moiety from geranyl-geranyl pyrophosphate to proteins having the C-terminal -XCC or -XCXC, where both cysteines may become modified. Acts on YPT1 and SEC4. The sequence is that of Geranylgeranyl transferase type-2 subunit beta (BET2) from Saccharomyces cerevisiae (strain ATCC 204508 / S288c) (Baker's yeast).